A 244-amino-acid polypeptide reads, in one-letter code: MPRPSPCADSGGGMMTTLTARPEAITFDPQQTALIVVDMQNAYATPGGYLDLAGFDVSTTRPVIANIQTAVTAARTAGMLIIWFQNGWDEQYVEAGGPGSPNFHKSNALKTMRNQPQLQGKLLAKGSWDYQLVDELVPQPGDIVLPKPRYSGFFNTPLDSILRSRGIRHLVFTGIATNVCVESTLRDGFFLEYFGVVLEDATHQAGPEFAQKAALFNIETFFGWVSDVETFCDALSSTSFARIA.

Catalysis depends on Asp38, which acts as the Proton acceptor. The active site involves Lys147. The active-site Nucleophile is Cys180.

Belongs to the isochorismatase family. RutB subfamily.

The catalysed reaction is (Z)-3-ureidoacrylate + H2O + H(+) = (Z)-3-aminoacrylate + NH4(+) + CO2. It carries out the reaction (Z)-3-ureidoacrylate + H2O = (Z)-3-aminoacrylate + carbamate + H(+). It catalyses the reaction (Z)-2-methylureidoacrylate + H2O + H(+) = (Z)-2-methylaminoacrylate + NH4(+) + CO2. Functionally, hydrolyzes ureidoacrylate to form aminoacrylate and carbamate. The carbamate hydrolyzes spontaneously, thereby releasing one of the nitrogen atoms of the pyrimidine ring as ammonia and one of its carbon atoms as CO2. The protein is Ureidoacrylate amidohydrolase RutB of Escherichia coli O6:H1 (strain CFT073 / ATCC 700928 / UPEC).